We begin with the raw amino-acid sequence, 144 residues long: Large ribosomal subunit protein uL15 (144 aa).

The interval 1 to 53 is disordered; sequence MRLNSLSPAEGAKHSAKRLGRGIGSGLGKTGGRGHKGQKSRTGGGVRRGFEGG. Positions 21–31 are enriched in gly residues; that stretch reads RGIGSGLGKTG.

The protein belongs to the universal ribosomal protein uL15 family. Part of the 50S ribosomal subunit.

In terms of biological role, binds to the 23S rRNA. The polypeptide is Large ribosomal subunit protein uL15 (Glaesserella parasuis serovar 5 (strain SH0165) (Haemophilus parasuis)).